Reading from the N-terminus, the 49-residue chain is MINYVNITCIIFSTRTLLVFDTSLYIPPFMLSFIGYSLSNQNSPLFLYH.

The helical transmembrane segment at 17 to 39 threads the bilayer; it reads LLVFDTSLYIPPFMLSFIGYSLS.

Its subcellular location is the membrane. This is an uncharacterized protein from Saccharomyces cerevisiae (strain ATCC 204508 / S288c) (Baker's yeast).